The chain runs to 656 residues: UvrABC system protein C (656 aa).

The region spanning 41–120 (KSSGCYLFKD…IKTNKPYFNI (80 aa)) is the GIY-YIG domain. Positions 230–265 (DDLEVFLERKMNQYSNDLEFENAAKIRDQISGLKLL) constitute a UVR domain.

This sequence belongs to the UvrC family. As to quaternary structure, interacts with UvrB in an incision complex.

The protein resides in the cytoplasm. In terms of biological role, the UvrABC repair system catalyzes the recognition and processing of DNA lesions. UvrC both incises the 5' and 3' sides of the lesion. The N-terminal half is responsible for the 3' incision and the C-terminal half is responsible for the 5' incision. The chain is UvrABC system protein C from Prochlorococcus marinus subsp. pastoris (strain CCMP1986 / NIES-2087 / MED4).